The sequence spans 362 residues: Prostaglandin F2-alpha receptor (362 aa).

Residues 1-31 lie on the Extracellular side of the membrane; it reads MSTNNSVQPVSPASELLSNTTCQLEEDLSIS. Residues asparagine 4 and asparagine 19 are each glycosylated (N-linked (GlcNAc...) asparagine). A helical transmembrane segment spans residues 32-54; that stretch reads FSIIFMTVGILSNSLAIAILMKA. Topologically, residues 55–69 are cytoplasmic; the sequence is YQRFRQKYKSSFLLL. Residues 70–90 form a helical membrane-spanning segment; it reads ASALVITDFFGHLINGTIAVF. At 91–109 the chain is on the extracellular side; it reads VYASDKDWIYFDKSNILCS. Cysteine 108 and cysteine 186 are joined by a disulfide. A helical membrane pass occupies residues 110 to 131; the sequence is IFGICMVFSGLCPLFLGSLMAI. Residues 132–152 lie on the Cytoplasmic side of the membrane; it reads ERCIGVTKPIFHSTKITTKHV. A helical transmembrane segment spans residues 153 to 175; sequence KMMLSGVCFFAVFVALLPILGHR. The Extracellular portion of the chain corresponds to 176 to 198; the sequence is DYKIQASRTWCFYKTDQIKDWED. The chain crosses the membrane as a helical span at residues 199–224; sequence RFYLLLFAFLGLLALGISFVCNAITG. At 225–250 the chain is on the cytoplasmic side; the sequence is ISLLKVKFRSQQHRQGRSHHFEMVIQ. A helical transmembrane segment spans residues 251–267; it reads LLGIMCVSCICWSPFLV. Residues 268–285 are Extracellular-facing; the sequence is TMASIGMNIQDFKDSCER. A helical transmembrane segment spans residues 286–307; the sequence is TLFTLRMATWNQILDPWVYILL. The Cytoplasmic portion of the chain corresponds to 308 to 362; it reads RKAVLRNLYVCTRRCCGVHVISLHVWELSSIKNSLKVAAISDLPVTEKVTQQTST.

It belongs to the G-protein coupled receptor 1 family.

The protein resides in the cell membrane. Functionally, receptor for prostaglandin F2-alpha (PGF2-alpha). The activity of this receptor is mediated by G proteins which activate a phosphatidylinositol-calcium second messenger system. Initiates luteolysis in the corpus luteum. This chain is Prostaglandin F2-alpha receptor (PTGFR), found in Ovis aries (Sheep).